Consider the following 247-residue polypeptide: STING ER exit protein (247 aa).

Serine 127 bears the Phosphoserine mark. Positions glutamate 195–arginine 216 form a coiled coil. Residues glutamine 215–arginine 247 are disordered.

This sequence belongs to the STEEP1 family.

Functionally, molecular adapter that stimulates membrane curvature formation and subsequent endoplasmic reticulum exit site (ERES) establishment by recruiting PI3K complex I, leading to COPII vesicle-mediated transport. In Drosophila melanogaster (Fruit fly), this protein is STING ER exit protein.